We begin with the raw amino-acid sequence, 216 residues long: Guanylate kinase (216 aa).

Residues 15-193 (GNLFMVVAPS…ALEELRNVVR (179 aa)) enclose the Guanylate kinase-like domain. An ATP-binding site is contributed by 22 to 29 (APSGAGKS).

This sequence belongs to the guanylate kinase family.

Its subcellular location is the cytoplasm. It catalyses the reaction GMP + ATP = GDP + ADP. In terms of biological role, essential for recycling GMP and indirectly, cGMP. In Cupriavidus pinatubonensis (strain JMP 134 / LMG 1197) (Cupriavidus necator (strain JMP 134)), this protein is Guanylate kinase.